The primary structure comprises 150 residues: Large ribosomal subunit protein bL9 (150 aa).

It belongs to the bacterial ribosomal protein bL9 family.

Functionally, binds to the 23S rRNA. The sequence is that of Large ribosomal subunit protein bL9 from Paraburkholderia xenovorans (strain LB400).